Reading from the N-terminus, the 567-residue chain is Mitochondrial distribution and morphology protein 34 (567 aa).

The region spanning methionine 1–arginine 224 is the SMP-LTD domain. Over residues asparagine 392–alanine 416 the composition is skewed to polar residues. The tract at residues asparagine 392–isoleucine 453 is disordered. The segment covering threonine 417 to serine 452 has biased composition (low complexity).

The protein belongs to the MDM34 family. Component of the ER-mitochondria encounter structure (ERMES) or MDM complex, composed of MMM1, MDM10, MDM12 and MDM34.

Its subcellular location is the mitochondrion outer membrane. Component of the ERMES/MDM complex, which serves as a molecular tether to connect the endoplasmic reticulum (ER) and mitochondria. Components of this complex are involved in the control of mitochondrial shape and protein biogenesis, and function in nonvesicular lipid trafficking between the ER and mitochondria. MDM34 is required for the interaction of the ER-resident membrane protein MMM1 and the outer mitochondrial membrane-resident beta-barrel protein MDM10. The sequence is that of Mitochondrial distribution and morphology protein 34 from Vanderwaltozyma polyspora (strain ATCC 22028 / DSM 70294 / BCRC 21397 / CBS 2163 / NBRC 10782 / NRRL Y-8283 / UCD 57-17) (Kluyveromyces polysporus).